A 352-amino-acid chain; its full sequence is UDP-N-acetylglucosamine--N-acetylmuramyl-(pentapeptide) pyrophosphoryl-undecaprenol N-acetylglucosamine transferase (352 aa).

Residues 14-16 (TGG), asparagine 124, arginine 164, serine 185, and glutamine 285 each bind UDP-N-acetyl-alpha-D-glucosamine.

It belongs to the glycosyltransferase 28 family. MurG subfamily.

It localises to the cell inner membrane. The enzyme catalyses di-trans,octa-cis-undecaprenyl diphospho-N-acetyl-alpha-D-muramoyl-L-alanyl-D-glutamyl-meso-2,6-diaminopimeloyl-D-alanyl-D-alanine + UDP-N-acetyl-alpha-D-glucosamine = di-trans,octa-cis-undecaprenyl diphospho-[N-acetyl-alpha-D-glucosaminyl-(1-&gt;4)]-N-acetyl-alpha-D-muramoyl-L-alanyl-D-glutamyl-meso-2,6-diaminopimeloyl-D-alanyl-D-alanine + UDP + H(+). It functions in the pathway cell wall biogenesis; peptidoglycan biosynthesis. Functionally, cell wall formation. Catalyzes the transfer of a GlcNAc subunit on undecaprenyl-pyrophosphoryl-MurNAc-pentapeptide (lipid intermediate I) to form undecaprenyl-pyrophosphoryl-MurNAc-(pentapeptide)GlcNAc (lipid intermediate II). The sequence is that of UDP-N-acetylglucosamine--N-acetylmuramyl-(pentapeptide) pyrophosphoryl-undecaprenol N-acetylglucosamine transferase from Chlamydia trachomatis serovar L2 (strain ATCC VR-902B / DSM 19102 / 434/Bu).